The chain runs to 154 residues: Crossover junction endodeoxyribonuclease RuvC (154 aa).

Catalysis depends on residues aspartate 7, glutamate 67, and aspartate 139. Aspartate 7, glutamate 67, and aspartate 139 together coordinate Mg(2+).

This sequence belongs to the RuvC family. In terms of assembly, homodimer which binds Holliday junction (HJ) DNA. The HJ becomes 2-fold symmetrical on binding to RuvC with unstacked arms; it has a different conformation from HJ DNA in complex with RuvA. In the full resolvosome a probable DNA-RuvA(4)-RuvB(12)-RuvC(2) complex forms which resolves the HJ. Mg(2+) is required as a cofactor.

It localises to the cytoplasm. The catalysed reaction is Endonucleolytic cleavage at a junction such as a reciprocal single-stranded crossover between two homologous DNA duplexes (Holliday junction).. In terms of biological role, the RuvA-RuvB-RuvC complex processes Holliday junction (HJ) DNA during genetic recombination and DNA repair. Endonuclease that resolves HJ intermediates. Cleaves cruciform DNA by making single-stranded nicks across the HJ at symmetrical positions within the homologous arms, yielding a 5'-phosphate and a 3'-hydroxyl group; requires a central core of homology in the junction. The consensus cleavage sequence is 5'-(A/T)TT(C/G)-3'. Cleavage occurs on the 3'-side of the TT dinucleotide at the point of strand exchange. HJ branch migration catalyzed by RuvA-RuvB allows RuvC to scan DNA until it finds its consensus sequence, where it cleaves and resolves the cruciform DNA. This is Crossover junction endodeoxyribonuclease RuvC from Prochlorococcus marinus (strain NATL2A).